Here is a 427-residue protein sequence, read N- to C-terminus: Enolase (427 aa).

Q163 is a binding site for (2R)-2-phosphoglycerate. E205 acts as the Proton donor in catalysis. Positions 242, 285, and 312 each coordinate Mg(2+). 4 residues coordinate (2R)-2-phosphoglycerate: K337, R366, S367, and K388. The Proton acceptor role is filled by K337.

This sequence belongs to the enolase family. Mg(2+) is required as a cofactor.

The protein resides in the cytoplasm. The protein localises to the secreted. Its subcellular location is the cell surface. The catalysed reaction is (2R)-2-phosphoglycerate = phosphoenolpyruvate + H2O. The protein operates within carbohydrate degradation; glycolysis; pyruvate from D-glyceraldehyde 3-phosphate: step 4/5. In terms of biological role, catalyzes the reversible conversion of 2-phosphoglycerate (2-PG) into phosphoenolpyruvate (PEP). It is essential for the degradation of carbohydrates via glycolysis. This chain is Enolase, found in Bradyrhizobium sp. (strain BTAi1 / ATCC BAA-1182).